A 187-amino-acid polypeptide reads, in one-letter code: Signal peptidase I U (187 aa).

The Cytoplasmic portion of the chain corresponds to methionine 1 to threonine 16. The chain crosses the membrane as a helical span at residues isoleucine 17–tyrosine 37. Over lysine 38 to lysine 187 the chain is Extracellular. Residues serine 46 and lysine 88 contribute to the active site.

It belongs to the peptidase S26 family.

It is found in the cell membrane. The catalysed reaction is Cleavage of hydrophobic, N-terminal signal or leader sequences from secreted and periplasmic proteins.. The chain is Signal peptidase I U (sipU) from Bacillus subtilis (strain 168).